We begin with the raw amino-acid sequence, 362 residues long: sn-glycerol-3-phosphate import ATP-binding protein UgpC (362 aa).

One can recognise an ABC transporter domain in the interval L4–I235. An ATP-binding site is contributed by G37–S44.

Belongs to the ABC transporter superfamily. sn-glycerol-3-phosphate importer (TC 3.A.1.1.3) family. In terms of assembly, the complex is composed of two ATP-binding proteins (UgpC), two transmembrane proteins (UgpA and UgpE) and a solute-binding protein (UgpB).

The protein localises to the cell inner membrane. It carries out the reaction sn-glycerol 3-phosphate(out) + ATP + H2O = sn-glycerol 3-phosphate(in) + ADP + phosphate + H(+). In terms of biological role, part of the ABC transporter complex UgpBAEC involved in sn-glycerol-3-phosphate (G3P) import. Responsible for energy coupling to the transport system. The chain is sn-glycerol-3-phosphate import ATP-binding protein UgpC from Yersinia enterocolitica serotype O:8 / biotype 1B (strain NCTC 13174 / 8081).